We begin with the raw amino-acid sequence, 579 residues long: GPI alpha-1,2-mannosyltransferase 4 (579 aa).

Helical transmembrane passes span 131 to 151 (LLLT…APPM), 156 to 173 (WNAL…VFYT), 180 to 200 (IEGL…TWGP), 216 to 236 (LGGI…FAVV), 258 to 278 (ALVL…TDSW), 369 to 389 (YLLL…HQEA), 391 to 411 (FLIP…QPVP), and 416 to 436 (VVLF…GGLV).

This sequence belongs to the glycosyltransferase 22 family. PIGZ subfamily. In terms of tissue distribution, widely expressed at low level, with highest level in brain and colon.

It localises to the endoplasmic reticulum membrane. It functions in the pathway glycolipid biosynthesis; glycosylphosphatidylinositol-anchor biosynthesis. Functionally, alpha-1,2-mannosyltransferase that catalyzes the transfer of the fourth mannose, via an alpha-1,2 bond, from a dolichol-phosphate-mannose (Dol-P-Man) to an alpha-D-Man-(1-&gt;2)-alpha-D-Man-(1-&gt;6)-2-PEtn-alpha-D-Man-(1-&gt;4)-alpha-D-GlcN-(1-&gt;6)-(1-radyl,2-acyl-sn-glycero-3-phospho)-2-acyl-inositol (also termed H6) intermediate and participates in the twelfth step of the glycosylphosphatidylinositol-anchor biosynthesis. The presence of a fourth mannose in GPI is facultative, suggesting that it only exists in some tissues. The polypeptide is GPI alpha-1,2-mannosyltransferase 4 (Homo sapiens (Human)).